A 256-amino-acid chain; its full sequence is Lysine-rich coiled-coil protein 1 (256 aa).

Disordered stretches follow at residues 61–83 (QRIP…TEDR) and 141–256 (GHST…ILGF). Polar residues-rich tracts occupy residues 64 to 79 (PSGT…SSSQ) and 141 to 153 (GHST…SHRQ). Composition is skewed to basic and acidic residues over residues 161–188 (HLEE…DLNK) and 218–227 (KNRDVSSKKE). The stretch at 208–247 (TEKLKNRKEKKNRDVSSKKEDRKRRKEKKEQGEERTEEEM) forms a coiled coil.

This is Lysine-rich coiled-coil protein 1 (Krcc1) from Rattus norvegicus (Rat).